Reading from the N-terminus, the 179-residue chain is Adenine phosphoribosyltransferase (179 aa).

The protein belongs to the purine/pyrimidine phosphoribosyltransferase family. As to quaternary structure, homodimer.

It localises to the cytoplasm. The enzyme catalyses AMP + diphosphate = 5-phospho-alpha-D-ribose 1-diphosphate + adenine. Its pathway is purine metabolism; AMP biosynthesis via salvage pathway; AMP from adenine: step 1/1. Its function is as follows. Catalyzes a salvage reaction resulting in the formation of AMP, that is energically less costly than de novo synthesis. The chain is Adenine phosphoribosyltransferase from Bradyrhizobium sp. (strain ORS 278).